Consider the following 1033-residue polypeptide: SIT4-associating protein SAP190 (1033 aa).

4 disordered regions span residues 32–82, 147–213, 768–813, and 828–1033; these read DQDD…TTES, PEII…QVET, FGND…HDSG, and ENEE…KEAF. The span at 158–170 shows a compositional bias: basic and acidic residues; the sequence is ILIERDRKDKKED. A compositionally biased stretch (acidic residues) spans 171 to 182; the sequence is AEEGGDSEETTN. Residues 183–195 are compositionally biased toward basic and acidic residues; the sequence is DSDHDSGDERSVD. Ser774 bears the Phosphoserine mark. Acidic residues-rich tracts occupy residues 784 to 793 and 828 to 838; these read SEDIIGDTEG and ENEEDYAEYSD. Ser857, Ser862, and Ser892 each carry phosphoserine. Basic and acidic residues predominate over residues 858–879; it reads DDGKSKSAESEFTDKISEHRDG. The segment covering 909-924 has biased composition (polar residues); that stretch reads SRSQPSDPKLQDQNIF. Over residues 932–944 the composition is skewed to acidic residues; sequence GVGDDDDYMDPND. Thr990 carries the phosphothreonine modification. Ser991 carries the phosphoserine modification. Residues 1000 to 1018 show a composition bias toward acidic residues; that stretch reads ISSDEEDSEDEDEENDMGN.

Belongs to the SAPS family. As to quaternary structure, associates with the SIT4 protein phosphatase catalytic subunit in a cell-cycle-dependent manner. In terms of processing, hyperphosphorylated in the absence of SIT4.

The protein localises to the cytoplasm. Functionally, positive regulator of protein phosphatase SIT4. Involved in the general amino acid control (GAAC) response regulated by TOR. Involved in the dephosphorylation of the elongator complex subunit IKI3. The chain is SIT4-associating protein SAP190 (SAP190) from Saccharomyces cerevisiae (strain AWRI1631) (Baker's yeast).